Reading from the N-terminus, the 320-residue chain is Glucosaminate ammonia-lyase (320 aa).

36–43 (TGMQAGGQ) is an FAD binding site. An intrachain disulfide couples Cys136 to Cys139. An FAD-binding site is contributed by 285–294 (DVADHVYRQA).

It belongs to the class-II pyridine nucleotide-disulfide oxidoreductase family.

It catalyses the reaction 2-amino-2-deoxy-D-gluconate = 2-dehydro-3-deoxy-D-gluconate + NH4(+). Catalyzes the conversion of 2-amino-2-deoxy-D-gluconate (GlcNA) to 2-keto-3-deoxy-D-gluconic acid (KDGA) and ammonia. This Pseudomonas fluorescens protein is Glucosaminate ammonia-lyase.